A 402-amino-acid chain; its full sequence is uncharacterized protein (402 aa).

The protein to M.genitalium MG148.

This is an uncharacterized protein from Caldicellulosiruptor sp. (strain Rt8B.4).